Consider the following 296-residue polypeptide: N-acetylmuramic acid 6-phosphate etherase 2 (296 aa).

An SIS domain is found at 55–218 (IIKSFNQGGR…STISMIGIGK (164 aa)). The active-site Proton donor is Glu-83. Residue Glu-114 is part of the active site.

It belongs to the GCKR-like family. MurNAc-6-P etherase subfamily. Homodimer.

It catalyses the reaction N-acetyl-D-muramate 6-phosphate + H2O = N-acetyl-D-glucosamine 6-phosphate + (R)-lactate. It functions in the pathway amino-sugar metabolism; N-acetylmuramate degradation. Specifically catalyzes the cleavage of the D-lactyl ether substituent of MurNAc 6-phosphate, producing GlcNAc 6-phosphate and D-lactate. This is N-acetylmuramic acid 6-phosphate etherase 2 from Enterococcus faecalis (strain ATCC 700802 / V583).